We begin with the raw amino-acid sequence, 149 residues long: Endothelin-1 (149 aa).

The propeptide occupies 1-33 (AAETVVSGAELSLTANSGGEKTPPHAPGLLRRS). Residues 6–26 (VSGAELSLTANSGGEKTPPHA) are disordered. 2 cysteine pairs are disulfide-bonded: C36–C50 and C38–C46. A propeptide spanning residues 57-149 (VNTPGHIAPY…ISQQLGNGKK (93 aa)) is cleaved from the precursor. The segment at 93 to 107 (CQCANQKDKKCWNFC) is endothelin-like.

This sequence belongs to the endothelin/sarafotoxin family.

Its subcellular location is the secreted. In terms of biological role, endothelins are endothelium-derived vasoconstrictor peptides. Probable ligand for G-protein coupled receptors EDNRA and EDNRB which activates PTK2B, BCAR1, BCAR3 and, GTPases RAP1 and RHOA cascade in glomerular mesangial cells. Also binds the DEAR/FBXW7-AS1 receptor. Promotes mesenteric arterial wall remodeling via activation of ROCK signaling and subsequent colocalization of NFATC3 with F-actin filaments. NFATC3 then translocates to the nucleus where it subsequently promotes the transcription of the smooth muscle hypertrophy and differentiation marker ACTA2. The polypeptide is Endothelin-1 (EDN1) (Cavia porcellus (Guinea pig)).